The following is a 211-amino-acid chain: Glutathione S-transferase class-mu 28 kDa isozyme (211 aa).

The GST N-terminal domain occupies 4 to 86; the sequence is DHIKVIYFNG…YMAKKHHMMG (83 aa). Glutathione is bound by residues Tyr-10, Arg-16, Trp-41, Lys-45, Leu-53, Glu-70, Ser-71, and Asp-104. The region spanning 88–211 is the GST C-terminal domain; sequence TEEEYYNVEK…YLSDRAATPF (124 aa).

This sequence belongs to the GST superfamily. Mu family. In terms of assembly, homodimer.

The catalysed reaction is RX + glutathione = an S-substituted glutathione + a halide anion + H(+). Conjugation of reduced glutathione to a wide number of exogenous and endogenous hydrophobic electrophiles. Its function is as follows. GST isoenzymes appear to play a central role in the parasite detoxification system. Other functions are also suspected including a role in increasing the solubility of haematin in the parasite gut. In Schistosoma haematobium (Blood fluke), this protein is Glutathione S-transferase class-mu 28 kDa isozyme.